We begin with the raw amino-acid sequence, 117 residues long: uncharacterized protein (117 aa).

The next 4 helical transmembrane spans lie at 3–23 (AVPIILVFAAGLNSCIGNILL), 40–60 (FLTPGFVGGVVFYGINVLLFA), 66–86 (LEVSVAYPILAGSGFAMLIIA), and 94–114 (PFHLHKWIGVALVLVGIIFLA).

To E.coli and S.aureus ethidium bromide resistance proteins (ebr/QacC/EmrE/MvrC).

It localises to the cell membrane. This is an uncharacterized protein from Sinorhizobium fredii (strain NBRC 101917 / NGR234).